Here is a 432-residue protein sequence, read N- to C-terminus: T-box transcription factor T (432 aa).

A DNA-binding region (T-box) is located at residues 49–217 (LWTRFKELTN…HNPFAKAFLD (169 aa)). The segment at 274–306 (CERYSSLRNHRSAPYPSPYTHRNNSPNNLADNS) is disordered. A compositionally biased stretch (polar residues) spans 293 to 306 (THRNNSPNNLADNS).

When not bound to DNA, exists as a monomer. Binds DNA as a dimer. In terms of tissue distribution, expressed in presumptive mesodermal cells around the blastopore, and then in the notochord.

The protein resides in the nucleus. Its function is as follows. Involved in the transcriptional regulation of genes required for mesoderm formation and differentiation. Binds to the palindromic T site 5'-TTCACACCTAGGTGTGAA-3' DNA sequence. Causes dorsal mesodermal differentiation of animal cap ectoderm when co-expressed with wnt8 and noggin. None of these molecules causes dorsal mesoderm formation when expressed alone. Establishes the left/right axis at early gastrula stage by directly up-regulating mesodermal expression of zic3. The chain is T-box transcription factor T from Xenopus laevis (African clawed frog).